The following is an 899-amino-acid chain: MLKAVLETTIGSKSKRDLKDYLPTLRNINKLERWALLLADEDFSKETEKLKDELKSGNSLENILERAFTLSREAARRRLKERPYDVQIIAGLALHKGKIIEMKTGEGKTLSSVQAAYLNSLTGDGVIIVTVNDYLAERDSNWMKPVFDLLGVSVGVVLSNMDYELRKAQYAKDITYVTNNELGFDYLRDNMRYDLNEKSLRKFNYCIIDEIDSILIDEARTPLIISGPTEGNTNAYLEVNSLVSFLKECSKDPKTGDYPLEIDDLDGDYTVDEKAKRISFTAKGLNNLEQLLVSKGIISGSMYTDSNFNYVHYMTQALKAHLLFLKNREYIVGDSGVEIVDEFTGRVLTGRRYSDGLHQAIEAKEGVRVANENKTMATITFQNLFRMFDKISGMTGTADTEAKEFHKIYNLDVVVVPTNRLLARIDEDDTIYYTEEFKFNAITDEVYKTYKKGQPVLVGTVSIEKSEILSAMFKNRGIKHEVLNAKNHSREAFIIAEAGAKHAVTIATNMAGRGTDIKLGGNIEHRVRKKIGTNVSLEEFQEAVKNERENYLKDYNEVKSLGGLYVIGSERHESRRIDNQLRGRSGRQGDPGRSRFYVSLEDDLMRLFAGDNLRSLMGKLGMATGEPITHSLLTKSLINAQKRVEDRNFEIRKHLLEYDDVITKQRDFIYAQRNSILEDTAIKDRILVALEEYLSFLLEGTKSSTVSNVFLNEVNSIFAYMLESLGSIENISSLDLKAKLMQIAKANLDEKENLIGRDLFNGFLRYEYLKNIDFKFQEHLANLDSLREAVYLRSYANKNPITEYKEEGFSIFSELIKDIKVSTIRRVLQLKLDSNSSDFKSTKKSRNVKPIHKELSGIVINENKSASNVQVVRSSPKIGRNEPCYCGSGKKYKNCHGKS.

Residues glutamine 87, 105–109, and aspartate 516 each bind ATP; that span reads GEGKT. Cysteine 884, cysteine 886, cysteine 895, and histidine 896 together coordinate Zn(2+).

It belongs to the SecA family. Monomer and homodimer. Part of the essential Sec protein translocation apparatus which comprises SecA, SecYEG and auxiliary proteins SecDF. Other proteins may also be involved. Zn(2+) is required as a cofactor.

It is found in the cell inner membrane. It localises to the cytoplasm. It carries out the reaction ATP + H2O + cellular proteinSide 1 = ADP + phosphate + cellular proteinSide 2.. Functionally, part of the Sec protein translocase complex. Interacts with the SecYEG preprotein conducting channel. Has a central role in coupling the hydrolysis of ATP to the transfer of proteins into and across the cell membrane, serving as an ATP-driven molecular motor driving the stepwise translocation of polypeptide chains across the membrane. The sequence is that of Protein translocase subunit SecA from Borreliella burgdorferi (strain ATCC 35210 / DSM 4680 / CIP 102532 / B31) (Borrelia burgdorferi).